The chain runs to 394 residues: uncharacterized protein (394 aa).

The protein belongs to the mycobacterial PPE family.

This is an uncharacterized protein from Mycobacterium tuberculosis (strain CDC 1551 / Oshkosh).